The primary structure comprises 1683 residues: Phospholipase D1 (1683 aa).

4 disordered regions span residues 1–150, 173–198, 259–289, and 384–416; these read MSNV…AYTQ, LKSS…QQVN, ILDI…SIPR, and VMEK…NITS. Position 2 is an N-acetylserine (serine 2). A phosphoserine mark is found at serine 8 and serine 30. Composition is skewed to basic and acidic residues over residues 20 to 34, 63 to 82, and 90 to 112; these read SVTE…RPDE, NGKE…DRNL, and SLDH…ENMH. Low complexity predominate over residues 116 to 125; the sequence is NNLHSSNNNV. Residues 141–150 are compositionally biased toward polar residues; it reads RRSSSVAYTQ. At serine 145 the chain carries Phosphoserine. Positions 263 to 279 are enriched in low complexity; that stretch reads TNSNHNHRGNNNNNTGE. The 197-residue stretch at 291-487 folds into the PX domain; it reads SSIISISSNV…EFYELSPLGN (197 aa). Over residues 392 to 404 the composition is skewed to polar residues; sequence KPSSAASAPHTSE. Positions 405–416 are enriched in low complexity; it reads NNNNDNGSNITS. The 169-residue stretch at 496-664 folds into the PH domain; it reads QGKQGYLVIR…SSIIKMSTST (169 aa). 2 consecutive PLD phosphodiesterase domains span residues 791–818 and 1091–1118; these read YFWA…CYGR and EQLY…NERS. Residues histidine 796, lysine 798, aspartate 803, histidine 1096, lysine 1098, and aspartate 1103 contribute to the active site. Positions 1430–1465 are disordered; the sequence is KDMRRHLSSSTESTRNGSNSLPLNEKSNEGESTNVD. The segment covering 1437–1451 has biased composition (polar residues); sequence SSSTESTRNGSNSLP. Serine 1461 carries the post-translational modification Phosphoserine. At threonine 1462 the chain carries Phosphothreonine.

Belongs to the phospholipase D family. As to quaternary structure, interacts with SRF1.

The catalysed reaction is a 1,2-diacyl-sn-glycero-3-phosphocholine + H2O = a 1,2-diacyl-sn-glycero-3-phosphate + choline + H(+). Its activity is regulated as follows. Activity is dependent of phosphatidylinositol 4,5-bisphosphate and the regulator SRF1. Inhibited by magnesium. In terms of biological role, required for meiosis and spore formation. Seems to be involved in the coordinate induction of late meiotic events. PLD activity is induced under sporulation conditions and seems to be necessary to complete the meiotic cycle, but not for vegetative cell growth. In Saccharomyces cerevisiae (strain ATCC 204508 / S288c) (Baker's yeast), this protein is Phospholipase D1 (SPO14).